The chain runs to 1024 residues: Error-prone DNA polymerase (1024 aa).

The protein belongs to the DNA polymerase type-C family. DnaE2 subfamily.

Its subcellular location is the cytoplasm. It carries out the reaction DNA(n) + a 2'-deoxyribonucleoside 5'-triphosphate = DNA(n+1) + diphosphate. Functionally, DNA polymerase involved in damage-induced mutagenesis and translesion synthesis (TLS). It is not the major replicative DNA polymerase. The chain is Error-prone DNA polymerase from Vibrio vulnificus (strain CMCP6).